Consider the following 225-residue polypeptide: Elongation factor 1-beta (225 aa).

In terms of domain architecture, GST C-terminal spans 2-84 (GFGDLKSPAG…ALGKYGPADV (83 aa)). At Lys-7 the chain carries N6-acetyllysine. Phosphoserine is present on residues Ser-8 and Ser-42. Residues 78–115 (KYGPADVEDTTGSGATDSKDDDDIDLFGSDDEEESEEA) are disordered. Residues Thr-88 and Thr-93 each carry the phosphothreonine modification. Ser-95 and Ser-106 each carry phosphoserine. Acidic residues predominate over residues 96–113 (KDDDDIDLFGSDDEEESE). Lys-147 is covalently cross-linked (Glycyl lysine isopeptide (Lys-Gly) (interchain with G-Cter in SUMO2)). Ser-174 is modified (phosphoserine).

This sequence belongs to the EF-1-beta/EF-1-delta family. In terms of assembly, EF-1 is composed of 4 subunits: alpha, beta (alpha subunit of the eEF1B subcomplex), delta (beta subunit of the eEF1B subcomplex), and gamma (gamma subunit of the eEF1B subcomplex). Interacts with elongation factor EEF1A1. Phosphorylation affects the GDP/GTP exchange rate.

Functionally, catalytic subunit of the guanine nucleotide exchange factor (GEF) (eEF1B subcomplex) of the eukaryotic elongation factor 1 complex (eEF1). Stimulates the exchange of GDP for GTP on elongation factor 1A (eEF1A), probably by displacing GDP from the nucleotide binding pocket in eEF1A. In Homo sapiens (Human), this protein is Elongation factor 1-beta (EEF1B2).